A 362-amino-acid polypeptide reads, in one-letter code: MASPIEVRLHMTYPDFTVRTDLTLPGSGITALFGPSGSGKTTCLRCIAGLEKAGQGFIRVHDEVWQDTEKGVFLAPHKRAIGYVFQEASLFPHLSVRANLEFGMKRIPRQQRNIQLPQATELLGIDHLLERSPDKLSGGERQRVGIARALLTSPRLMLLDEPLAALDARRKSEILPYLERLHRELDIPMLYVSHAQDEVARLADHLVLLEAGNVLASGPIRETLARLDLPLAMGGDAGVVIEGTVSAYDRNYQLLSVTLPDSTLCMRVAHAEMQIGTLLRVKVQARDVSLNLQPDDQSSILNRLPVTVMEEALADNSAHVLVKLDAGGTPLLARITRYSSDQLNLHRGQSLWAQIKAVAVLA.

One can recognise an ABC transporter domain in the interval 2–236 (ASPIEVRLHM…LDLPLAMGGD (235 aa)). ATP is bound at residue 34 to 41 (GPSGSGKT). Residues 297–362 (QSSILNRLPV…AQIKAVAVLA (66 aa)) enclose the Mop domain.

The protein belongs to the ABC transporter superfamily. Molybdate importer (TC 3.A.1.8) family. In terms of assembly, the complex is composed of two ATP-binding proteins (ModC), two transmembrane proteins (ModB) and a solute-binding protein (ModA).

It is found in the cell inner membrane. It carries out the reaction molybdate(out) + ATP + H2O = molybdate(in) + ADP + phosphate + H(+). Part of the ABC transporter complex ModABC involved in molybdenum import. Responsible for energy coupling to the transport system. This Pseudomonas savastanoi pv. phaseolicola (strain 1448A / Race 6) (Pseudomonas syringae pv. phaseolicola (strain 1448A / Race 6)) protein is Molybdenum import ATP-binding protein ModC.